A 277-amino-acid chain; its full sequence is C2H2-type zinc-finger transcription factor (277 aa).

2 disordered regions span residues 23–66 (PTMN…AHPP) and 78–146 (MNEP…TDSI). The segment covering 27–37 (EIETTDNTYPR) has biased composition (polar residues). A C2H2-type; degenerate zinc finger spans residues 185–208 (HPCPDCGRVFTRSTARNFHRQSGT).

This sequence belongs to the GLI C2H2-type zinc-finger protein family.

It localises to the nucleus. In terms of biological role, C2H2-type zinc-finger transcription factor that controls the expression of the nonribosomal peptide synthases inpA and inpB, as well as of the other inp cluster-associated genes. Also mediates the expression of the asperfuranone biosynthesis gene cluster by binding to the afoA promoter. Probably recognizes the 5'-CT/C/AAAAGGAT/AT/GG/CA-3' motif in the promoters of teget genes. This chain is C2H2-type zinc-finger transcription factor, found in Emericella nidulans (strain FGSC A4 / ATCC 38163 / CBS 112.46 / NRRL 194 / M139) (Aspergillus nidulans).